We begin with the raw amino-acid sequence, 215 residues long: Ribose-5-phosphate isomerase A (215 aa).

Residues 26 to 29, 79 to 82, and 92 to 95 contribute to the substrate site; these read TGST, DGAD, and KGGG. Glu101 acts as the Proton acceptor in catalysis. Lys119 is a binding site for substrate.

Belongs to the ribose 5-phosphate isomerase family. As to quaternary structure, homodimer.

It carries out the reaction aldehydo-D-ribose 5-phosphate = D-ribulose 5-phosphate. Its pathway is carbohydrate degradation; pentose phosphate pathway; D-ribose 5-phosphate from D-ribulose 5-phosphate (non-oxidative stage): step 1/1. Its function is as follows. Catalyzes the reversible conversion of ribose-5-phosphate to ribulose 5-phosphate. The sequence is that of Ribose-5-phosphate isomerase A from Xanthomonas oryzae pv. oryzae (strain MAFF 311018).